The chain runs to 141 residues: Large ribosomal subunit protein uL11 (141 aa).

Belongs to the universal ribosomal protein uL11 family. In terms of assembly, part of the ribosomal stalk of the 50S ribosomal subunit. Interacts with L10 and the large rRNA to form the base of the stalk. L10 forms an elongated spine to which L12 dimers bind in a sequential fashion forming a multimeric L10(L12)X complex. Post-translationally, one or more lysine residues are methylated.

Functionally, forms part of the ribosomal stalk which helps the ribosome interact with GTP-bound translation factors. This Clostridium perfringens (strain ATCC 13124 / DSM 756 / JCM 1290 / NCIMB 6125 / NCTC 8237 / Type A) protein is Large ribosomal subunit protein uL11.